The primary structure comprises 346 residues: Actin-like protein 10 (346 aa).

The protein belongs to the actin family.

This is Actin-like protein 10 (Actl10) from Mus musculus (Mouse).